Consider the following 559-residue polypeptide: Intestinal-type alkaline phosphatase (559 aa).

Positions 1–19 (MQGPWVLLLLGLRLQLSLS) are cleaved as a signal peptide. Asp-61 contributes to the Mg(2+) binding site. Residues Asp-61 and Ser-111 each contribute to the Zn(2+) site. Catalysis depends on Ser-111, which acts as the Phosphoserine intermediate. Cys-140 and Cys-202 are disulfide-bonded. An N-linked (GlcNAc...) asparagine glycan is attached at Asn-141. Ser-174 is a binding site for Mg(2+). Glu-235 provides a ligand contact to Ca(2+). Asn-241 carries an N-linked (GlcNAc...) asparagine glycan. Positions 288, 289, and 304 each coordinate Ca(2+). Glu-330 lines the Mg(2+) pocket. Positions 335, 339, 376, and 377 each coordinate Zn(2+). N-linked (GlcNAc...) asparagine glycosylation is present at Asn-426. A Zn(2+)-binding site is contributed by His-450. A disulfide bridge links Cys-485 with Cys-492. Positions 496–531 (PPADESQTTTTTRQTTITTTTTTTTTTTTPVHNSAR) are disordered. The segment covering 503-524 (TTTTTRQTTITTTTTTTTTTTT) has biased composition (low complexity). The GPI-anchor amidated asparagine moiety is linked to residue Asn-528. Positions 529-559 (SARSLGPATAPLALALLAGMLMLLLGAPAES) are cleaved as a propeptide — removed in mature form.

It belongs to the alkaline phosphatase family. Homodimer. The cofactor is Mg(2+). Requires Zn(2+) as cofactor. Ca(2+) serves as cofactor. In terms of tissue distribution, intestine and thymus.

It is found in the cell membrane. It carries out the reaction a phosphate monoester + H2O = an alcohol + phosphate. In terms of biological role, alkaline phosphatase that can hydrolyze various phosphate compounds. The protein is Intestinal-type alkaline phosphatase (Iap) of Mus musculus (Mouse).